Here is a 150-residue protein sequence, read N- to C-terminus: UPF0756 membrane protein Asuc_1151 (150 aa).

Transmembrane regions (helical) follow at residues 1 to 21 (MSLH…LGVL), 52 to 72 (YGLN…IVAG), 82 to 102 (LLHW…WLAG), and 123 to 143 (ILGV…AGIL).

It belongs to the UPF0756 family.

Its subcellular location is the cell membrane. The chain is UPF0756 membrane protein Asuc_1151 from Actinobacillus succinogenes (strain ATCC 55618 / DSM 22257 / CCUG 43843 / 130Z).